The following is a 331-amino-acid chain: Heat-inducible transcription repressor HrcA (331 aa).

It belongs to the HrcA family.

Its function is as follows. Negative regulator of class I heat shock genes (grpE-dnaK-dnaJ and groELS operons). Prevents heat-shock induction of these operons. The sequence is that of Heat-inducible transcription repressor HrcA from Synechococcus sp. (strain WH7803).